A 379-amino-acid polypeptide reads, in one-letter code: Alcohol dehydrogenase 1 (379 aa).

Cysteine 47, threonine 49, histidine 69, cysteine 99, cysteine 102, cysteine 105, cysteine 113, and cysteine 177 together coordinate Zn(2+). Threonine 49 and histidine 69 together coordinate an alcohol. Position 49 (threonine 49) interacts with NAD(+). NAD(+) contacts are provided by residues 202–207, aspartate 226, arginine 231, threonine 272, valine 295, 295–297, phenylalanine 322, and arginine 372; these read GLGAVG and VGV.

The protein belongs to the zinc-containing alcohol dehydrogenase family. Homodimer. Zn(2+) serves as cofactor.

It localises to the cytoplasm. The enzyme catalyses a primary alcohol + NAD(+) = an aldehyde + NADH + H(+). It carries out the reaction a secondary alcohol + NAD(+) = a ketone + NADH + H(+). This chain is Alcohol dehydrogenase 1 (ADH1), found in Cenchrus americanus (Pearl millet).